Here is a 208-residue protein sequence, read N- to C-terminus: uncharacterized protein (208 aa).

The signal sequence occupies residues 1–16; it reads MKFLLIACLAVPAILA. A glycan (N-linked (GlcNAc...) asparagine) is linked at Asn-79.

This is an uncharacterized protein from Caenorhabditis elegans.